Here is a 330-residue protein sequence, read N- to C-terminus: Putative glycosyltransferase ORF330 (330 aa).

Belongs to the glycosyltransferase group 1 family. Glycosyltransferase 4 subfamily.

In Acidianus filamentous virus 2 (isolate Italy/Pozzuoli) (AFV-2), this protein is Putative glycosyltransferase ORF330.